A 180-amino-acid chain; its full sequence is Ribosome rescue factor SmrB (180 aa).

The 76-residue stretch at 98-173 (LDLHGLTQLQ…GNAALLVLVA (76 aa)) folds into the Smr domain.

It belongs to the SmrB family. As to quaternary structure, associates with collided ribosomes, but not with correctly translating polysomes.

Its function is as follows. Acts as a ribosome collision sensor. Detects stalled/collided disomes (pairs of ribosomes where the leading ribosome is stalled and a second ribosome has collided with it) and endonucleolytically cleaves mRNA at the 5' boundary of the stalled ribosome. Stalled/collided disomes form a new interface (primarily via the 30S subunits) that binds SmrB. Cleaved mRNA becomes available for tmRNA ligation, leading to ribosomal subunit dissociation and rescue of stalled ribosomes. The polypeptide is Ribosome rescue factor SmrB (Pectobacterium atrosepticum (strain SCRI 1043 / ATCC BAA-672) (Erwinia carotovora subsp. atroseptica)).